Reading from the N-terminus, the 492-residue chain is Ribulose bisphosphate carboxylase large chain (492 aa).

Substrate contacts are provided by N131 and T181. The Proton acceptor role is filled by K183. A substrate-binding site is contributed by K185. K209, D211, and E212 together coordinate Mg(2+). Position 209 is an N6-carboxylysine (K209). H301 acts as the Proton acceptor in catalysis. Residues R302, H334, and S386 each contribute to the substrate site.

The protein belongs to the RuBisCO large chain family. Type I subfamily. As to quaternary structure, heterohexadecamer of 8 large chains and 8 small chains. Mg(2+) is required as a cofactor.

The enzyme catalyses 2 (2R)-3-phosphoglycerate + 2 H(+) = D-ribulose 1,5-bisphosphate + CO2 + H2O. It carries out the reaction D-ribulose 1,5-bisphosphate + O2 = 2-phosphoglycolate + (2R)-3-phosphoglycerate + 2 H(+). In terms of biological role, ruBisCO catalyzes two reactions: the carboxylation of D-ribulose 1,5-bisphosphate, the primary event in carbon dioxide fixation, as well as the oxidative fragmentation of the pentose substrate. Both reactions occur simultaneously and in competition at the same active site. The chain is Ribulose bisphosphate carboxylase large chain from Nitrosococcus oceani (strain ATCC 19707 / BCRC 17464 / JCM 30415 / NCIMB 11848 / C-107).